A 302-amino-acid chain; its full sequence is Short-chain dehydrogenase/reductase 1 (302 aa).

NADP(+)-binding positions include 20-23, Arg-43, 71-72, and Asn-98; these read NKGL and DV. Ser-170 lines the substrate pocket. NADP(+) is bound by residues Tyr-226, Lys-230, and 257-262; that span reads VKTDIN. Tyr-226 (proton acceptor) is an active-site residue.

This sequence belongs to the short-chain dehydrogenases/reductases (SDR) family. In terms of tissue distribution, mainly expressed in flowers and flower buds, to a lesser extent in leaves and, at low levels, in stems and roots.

It functions in the pathway secondary metabolite biosynthesis; terpenoid biosynthesis. Component of the oleanane-type triterpene saponins (e.g. saponarioside A and saponarioside B) biosynthetic pathway, leading to the production of natural products with detergent properties used as traditional sources of soap. A dehydrogenase/reductase that, together with UGT74CD1, mediates the conversion of QA-tri to QA-triF; UGT74CD1 may transfer 4-keto-6-deoxy-glucose to QA-tri, which is in turn reduced to D-fucose by SDR1, thus leading to QA-triF formation via the initiation of the C-28 sugar chain. In Saponaria officinalis (Common soapwort), this protein is Short-chain dehydrogenase/reductase 1.